The following is a 498-amino-acid chain: tRNA-guanine(15) transglycosylase (498 aa).

The active-site Nucleophile is D85. Position 120 (D120) interacts with substrate. The Zn(2+) site is built by C275, C277, and C280.

This sequence belongs to the archaeosine tRNA-ribosyltransferase family. Requires Zn(2+) as cofactor.

It carries out the reaction guanosine(15) in tRNA + 7-cyano-7-deazaguanine = 7-cyano-7-carbaguanosine(15) in tRNA + guanine. Its pathway is tRNA modification; archaeosine-tRNA biosynthesis. Exchanges the guanine residue with 7-cyano-7-deazaguanine (preQ0) at position 15 in the dihydrouridine loop (D-loop) of archaeal tRNAs. This chain is tRNA-guanine(15) transglycosylase, found in Sulfolobus acidocaldarius (strain ATCC 33909 / DSM 639 / JCM 8929 / NBRC 15157 / NCIMB 11770).